We begin with the raw amino-acid sequence, 213 residues long: ATP phosphoribosyltransferase (213 aa).

It belongs to the ATP phosphoribosyltransferase family. Short subfamily. As to quaternary structure, heteromultimer composed of HisG and HisZ subunits.

It is found in the cytoplasm. The enzyme catalyses 1-(5-phospho-beta-D-ribosyl)-ATP + diphosphate = 5-phospho-alpha-D-ribose 1-diphosphate + ATP. Its pathway is amino-acid biosynthesis; L-histidine biosynthesis; L-histidine from 5-phospho-alpha-D-ribose 1-diphosphate: step 1/9. In terms of biological role, catalyzes the condensation of ATP and 5-phosphoribose 1-diphosphate to form N'-(5'-phosphoribosyl)-ATP (PR-ATP). Has a crucial role in the pathway because the rate of histidine biosynthesis seems to be controlled primarily by regulation of HisG enzymatic activity. This chain is ATP phosphoribosyltransferase, found in Bacillus pumilus (strain SAFR-032).